We begin with the raw amino-acid sequence, 561 residues long: Septation ring formation regulator EzrA (561 aa).

The Extracellular portion of the chain corresponds to 1–3; the sequence is MWI. The helical transmembrane segment at 4-22 threads the bilayer; it reads VVFSLLVLTVTFFVYGALR. Over 23 to 561 the chain is Cytoplasmic; it reads RKAFYKRVDK…VLEKVQHLAG (539 aa). Coiled coils occupy residues 98-130, 166-214, and 251-465; these read RFQK…IQVL, AKVF…HLLK, and FAID…KLSD.

Belongs to the EzrA family.

The protein resides in the cell membrane. Its function is as follows. Negative regulator of FtsZ ring formation; modulates the frequency and position of FtsZ ring formation. Inhibits FtsZ ring formation at polar sites. Interacts either with FtsZ or with one of its binding partners to promote depolymerization. The chain is Septation ring formation regulator EzrA from Halalkalibacterium halodurans (strain ATCC BAA-125 / DSM 18197 / FERM 7344 / JCM 9153 / C-125) (Bacillus halodurans).